A 494-amino-acid chain; its full sequence is Rho GTPase-activating protein 19 (494 aa).

N-acetylalanine is present on alanine 2. Residues serine 7 and serine 31 each carry the phosphoserine modification. Residues 102–308 (MSLKRKEKGV…FMIKHSQKLF (207 aa)) form the Rho-GAP domain. 2 disordered regions span residues 349–368 (KSQK…TQHH) and 399–421 (QSLT…ARSR). Basic and acidic residues predominate over residues 354–368 (NRVDSCPHQEETQHH). A compositionally biased stretch (polar residues) spans 399 to 415 (QSLTQTPGREPSTSQVQ). Phosphoserine is present on residues serine 422, serine 438, and serine 470. Threonine 478 is modified (phosphothreonine).

Strong expression in fetal heart, brain, placenta, lung, liver, skeletal muscle, kidney and pancreas. Weak expression in adult pancreas, spleen, thymus, and ovary.

Its subcellular location is the nucleus. In terms of biological role, GTPase activator for the Rho-type GTPases by converting them to an inactive GDP-bound state. The protein is Rho GTPase-activating protein 19 (ARHGAP19) of Homo sapiens (Human).